Here is a 396-residue protein sequence, read N- to C-terminus: Phosphoglycerate kinase (396 aa).

Substrate contacts are provided by residues 21–23 (DFN), Arg-36, 59–62 (HLGK), Arg-119, and Arg-156. Residues Lys-206, Gly-294, Glu-325, and 352–355 (GGDS) each bind ATP.

This sequence belongs to the phosphoglycerate kinase family. Monomer.

It is found in the cytoplasm. It carries out the reaction (2R)-3-phosphoglycerate + ATP = (2R)-3-phospho-glyceroyl phosphate + ADP. Its pathway is carbohydrate degradation; glycolysis; pyruvate from D-glyceraldehyde 3-phosphate: step 2/5. The protein is Phosphoglycerate kinase of Listeria monocytogenes serotype 4b (strain CLIP80459).